Consider the following 123-residue polypeptide: Small ribosomal subunit protein uS12c (123 aa).

Belongs to the universal ribosomal protein uS12 family. Part of the 30S ribosomal subunit.

The protein resides in the plastid. It localises to the chloroplast. Its function is as follows. With S4 and S5 plays an important role in translational accuracy. Located at the interface of the 30S and 50S subunits. The protein is Small ribosomal subunit protein uS12c (rps12) of Physcomitrium patens (Spreading-leaved earth moss).